Here is a 245-residue protein sequence, read N- to C-terminus: Carboxy-S-adenosyl-L-methionine synthase (245 aa).

S-adenosyl-L-methionine-binding positions include tyrosine 42, 67 to 69, 92 to 93, 120 to 121, asparagine 135, and arginine 202; these read GCS, DN, and DI.

Belongs to the class I-like SAM-binding methyltransferase superfamily. Cx-SAM synthase family. In terms of assembly, homodimer.

It carries out the reaction prephenate + S-adenosyl-L-methionine = carboxy-S-adenosyl-L-methionine + 3-phenylpyruvate + H2O. Functionally, catalyzes the conversion of S-adenosyl-L-methionine (SAM) to carboxy-S-adenosyl-L-methionine (Cx-SAM). In Vibrio campbellii (strain ATCC BAA-1116), this protein is Carboxy-S-adenosyl-L-methionine synthase.